An 859-amino-acid chain; its full sequence is DNA mismatch repair protein MutS (859 aa).

Residue 622–629 coordinates ATP; it reads GPNMGGKS.

This sequence belongs to the DNA mismatch repair MutS family.

This protein is involved in the repair of mismatches in DNA. It is possible that it carries out the mismatch recognition step. This protein has a weak ATPase activity. The chain is DNA mismatch repair protein MutS from Coxiella burnetii (strain Dugway 5J108-111).